Reading from the N-terminus, the 221-residue chain is Sugar transporter SWEET1 (221 aa).

7 helical membrane-spanning segments follow: residues 3–23, 43–63, 68–88, 102–122, 129–149, 160–180, and 186–206; these read AGGVADSFLSSACVLFTLGMF, QFLPFLTTDVNNLSWLSYGVL, TLIIVNSVGAVLQTLYILAYL, ATLLAVLLLGYGYFWLLVPDL, LGLFCSVFTISMYLSPLADLA, LSFSLTIATLFCSASWSIYGF, and YITVPNLPGILTSLIRLGLFC. The MtN3/slv 1 domain maps to 10 to 94; sequence FLSSACVLFT…LAYLHYSPQK (85 aa). The MtN3/slv 2 domain occupies 127–212; it reads QQLGLFCSVF…GLFCKYPPEQ (86 aa). Residues 149–221 form a mediates interaction with TRPV2 region; that stretch reads AKIVQTKSTQ…QDRKYRLLQT (73 aa).

This sequence belongs to the SWEET sugar transporter family. Interacts with TRPV2; the interaction probably occurs intracellularly and depends on TRPV2 N-glycosylation. Expressed at high levels in lung, placenta, spleen and thymus, at intermediate levels in brain, heart, kidney and testis, and at low levels in bone marrow, liver and lymph node. Within the thymus expression is highest in non-lymphoid cells.

The protein localises to the golgi apparatus membrane. Its subcellular location is the cell membrane. Functionally, mediates sugar transport across membranes. May regulate the expression of RAG1 a gene involved in V(D)J recombination. The polypeptide is Sugar transporter SWEET1 (Slc50a1) (Mus musculus (Mouse)).